A 1017-amino-acid polypeptide reads, in one-letter code: Probable isoleucine--tRNA ligase, cytoplasmic (1017 aa).

The 'HIGH' region signature appears at 45–55 (PFATGLPHYGH). The 'KMSKS' region signature appears at 609-613 (KMSKR). K612 provides a ligand contact to ATP.

It belongs to the class-I aminoacyl-tRNA synthetase family.

Its subcellular location is the cytoplasm. The enzyme catalyses tRNA(Ile) + L-isoleucine + ATP = L-isoleucyl-tRNA(Ile) + AMP + diphosphate. The polypeptide is Probable isoleucine--tRNA ligase, cytoplasmic (Encephalitozoon cuniculi (strain GB-M1) (Microsporidian parasite)).